The sequence spans 265 residues: MMLNTLFLPIFLFFLITFDYVSTQTCFNGYFKPNGTYDLNRRRILSSLASKVTAHNGFYSSTIGQNPNQMFIISMCIPGTKPERCSDCIKGSTDGLLRSCPNQTVGYVWPDCCMVRYSNISFSGSLIMEPSQPVSDPAPIGVDLTLFDRIWDELMSRTITTASRTHGSLSFGHKYYAADVASLTTFQTIYTMVQCTPDVSSGDCEFCLKRTVLDYKKCCRGHIGGAFVRPFCFIRWDLYPFAGAFENITLPSPPPPLSLTPPVSN.

Positions 1-23 are cleaved as a signal peptide; it reads MMLNTLFLPIFLFFLITFDYVST. 2 Gnk2-homologous domains span residues 24–122 and 128–241; these read QTCF…NISF and MEPS…LYPF. N-linked (GlcNAc...) asparagine glycosylation is found at Asn-34, Asn-102, and Asn-119. Asn-247 carries N-linked (GlcNAc...) asparagine glycosylation.

The protein belongs to the protein kinase superfamily. Ser/Thr protein kinase family. CRK subfamily.

Its subcellular location is the secreted. This Arabidopsis thaliana (Mouse-ear cress) protein is Putative cysteine-rich receptor-like protein kinase At4g11521.